We begin with the raw amino-acid sequence, 278 residues long: Transmembrane protein 41B (278 aa).

Residues 1-31 (MQVHERSHTGGHTCQCNHGSEKKAPATGKVH) form a disordered region. Transmembrane regions (helical) follow at residues 39–59 (MSLL…FLVY), 96–116 (FYVE…TFAI), 132–154 (FPLA…YLLS), 184–204 (LINY…FINI), 212–232 (PLKV…FVAI), and 249–269 (SWNS…PAIF). The interval 127–238 (GFLYPFPLAL…FVAIKAGTTL (112 aa)) is VTT domain; required for its function in autophagy.

Belongs to the TMEM41 family.

The protein resides in the endoplasmic reticulum membrane. The protein localises to the endomembrane system. It carries out the reaction a 1,2-diacyl-sn-glycero-3-phospho-L-serine(in) = a 1,2-diacyl-sn-glycero-3-phospho-L-serine(out). It catalyses the reaction cholesterol(in) = cholesterol(out). The enzyme catalyses a 1,2-diacyl-sn-glycero-3-phosphocholine(in) = a 1,2-diacyl-sn-glycero-3-phosphocholine(out). The catalysed reaction is a 1,2-diacyl-sn-glycero-3-phosphoethanolamine(in) = a 1,2-diacyl-sn-glycero-3-phosphoethanolamine(out). Its function is as follows. Phospholipid scramblase involved in lipid homeostasis and membrane dynamics processes. Has phospholipid scramblase activity toward cholesterol and phosphatidylserine, as well as phosphatidylethanolamine and phosphatidylcholine. Required for autophagosome formation: participates in early stages of autophagosome biogenesis at the endoplasmic reticulum (ER) membrane by reequilibrating the leaflets of the ER as lipids are extracted by atg2 (atg2a or atg2b) to mediate autophagosome assembly. In addition to autophagy, involved in other processes in which phospholipid scramblase activity is required. Required for normal motor neuron development. The chain is Transmembrane protein 41B from Xenopus tropicalis (Western clawed frog).